The primary structure comprises 34 residues: Brevinin-2GHa (34 aa).

The cysteines at positions 27 and 33 are disulfide-linked.

In terms of tissue distribution, expressed by the skin glands.

Its subcellular location is the secreted. Its function is as follows. Antimicrobial peptide. Active against the Gram-positive bacteria S.aureus FDA209P (MIC=14.9 ug/ml) and B.subtilis ATCC 6633 (MIC&gt;64 ug/ml), but not active against the Gram-negative bacterium E.coli or the fungus C.albicans. The chain is Brevinin-2GHa from Sylvirana guentheri (Gunther's frog).